Here is a 284-residue protein sequence, read N- to C-terminus: Elongation factor Ts (284 aa).

Residues 80-83 are involved in Mg(2+) ion dislocation from EF-Tu; that stretch reads TDFV.

It belongs to the EF-Ts family.

It is found in the cytoplasm. In terms of biological role, associates with the EF-Tu.GDP complex and induces the exchange of GDP to GTP. It remains bound to the aminoacyl-tRNA.EF-Tu.GTP complex up to the GTP hydrolysis stage on the ribosome. The polypeptide is Elongation factor Ts (Photobacterium profundum (strain SS9)).